We begin with the raw amino-acid sequence, 666 residues long: Protein SLY1 (666 aa).

4 repeat units span residues 106–142 (KENIDIIVNDLKSDKYSEFYINFTSSLPRNLLEDLAQ), 220–257 (KGGPAEIIAEKLGTKLRDFVINTNSSSTSTLQGNDSLE), 436–474 (LDILKDGKTNNLEDKLRSFIVLYLTSTTGLPKDFVQNVE), and 478–514 (KENDYDINALKYVYKLREFMQLSNMSLQNKSLEDGSD). Residues 106 to 514 (KENIDIIVND…QNKSLEDGSD (409 aa)) are 4 X approximate repeats.

This sequence belongs to the STXBP/unc-18/SEC1 family. In terms of assembly, interacts with SED5.

Its subcellular location is the cytoplasm. The protein resides in the membrane. Functionally, able to suppress the functional loss of YPT1. SLY1 is essential for cell viability. May interact indirectly, or directly with YPT1. This Saccharomyces cerevisiae (strain ATCC 204508 / S288c) (Baker's yeast) protein is Protein SLY1 (SLY1).